The chain runs to 789 residues: Endonuclease MutS2 (789 aa).

334 to 341 contributes to the ATP binding site; it reads GPNTGGKT. The disordered stretch occupies residues 690 to 714; that stretch reads PEKDIQQSGTGKIMKSKTGDTKSEV. The Smr domain maps to 714-789; the sequence is VDVRGKNLEE…GMGVTIVELK (76 aa).

The protein belongs to the DNA mismatch repair MutS family. MutS2 subfamily. In terms of assembly, homodimer. Binds to stalled ribosomes, contacting rRNA.

Endonuclease that is involved in the suppression of homologous recombination and thus may have a key role in the control of bacterial genetic diversity. In terms of biological role, acts as a ribosome collision sensor, splitting the ribosome into its 2 subunits. Detects stalled/collided 70S ribosomes which it binds and splits by an ATP-hydrolysis driven conformational change. Acts upstream of the ribosome quality control system (RQC), a ribosome-associated complex that mediates the extraction of incompletely synthesized nascent chains from stalled ribosomes and their subsequent degradation. Probably generates substrates for RQC. In Alkaliphilus metalliredigens (strain QYMF), this protein is Endonuclease MutS2.